A 341-amino-acid chain; its full sequence is RNA 3'-terminal phosphate cyclase (341 aa).

Residues Q102 and 283 to 287 (HLADQ) each bind ATP. H308 (tele-AMP-histidine intermediate) is an active-site residue.

This sequence belongs to the RNA 3'-terminal cyclase family. Type 1 subfamily.

Its subcellular location is the cytoplasm. The enzyme catalyses a 3'-end 3'-phospho-ribonucleotide-RNA + ATP = a 3'-end 2',3'-cyclophospho-ribonucleotide-RNA + AMP + diphosphate. Catalyzes the conversion of 3'-phosphate to a 2',3'-cyclic phosphodiester at the end of RNA. The mechanism of action of the enzyme occurs in 3 steps: (A) adenylation of the enzyme by ATP; (B) transfer of adenylate to an RNA-N3'P to produce RNA-N3'PP5'A; (C) and attack of the adjacent 2'-hydroxyl on the 3'-phosphorus in the diester linkage to produce the cyclic end product. The biological role of this enzyme is unknown but it is likely to function in some aspects of cellular RNA processing. This is RNA 3'-terminal phosphate cyclase from Pseudomonas aeruginosa (strain LESB58).